The primary structure comprises 167 residues: NAD(P)H-quinone oxidoreductase subunit I, chloroplastic (167 aa).

4Fe-4S ferredoxin-type domains are found at residues 55–84 (GRIHFEFDKCIACEVCVRVCPIDLPVVDWK) and 95–124 (LNYSIDFGICIFCGNCVEYCPTNCLSMTEE). Positions 64, 67, 70, 74, 104, 107, 110, and 114 each coordinate [4Fe-4S] cluster.

The protein belongs to the complex I 23 kDa subunit family. As to quaternary structure, NDH is composed of at least 16 different subunits, 5 of which are encoded in the nucleus. Requires [4Fe-4S] cluster as cofactor.

Its subcellular location is the plastid. The protein localises to the chloroplast thylakoid membrane. The catalysed reaction is a plastoquinone + NADH + (n+1) H(+)(in) = a plastoquinol + NAD(+) + n H(+)(out). It catalyses the reaction a plastoquinone + NADPH + (n+1) H(+)(in) = a plastoquinol + NADP(+) + n H(+)(out). Its function is as follows. NDH shuttles electrons from NAD(P)H:plastoquinone, via FMN and iron-sulfur (Fe-S) centers, to quinones in the photosynthetic chain and possibly in a chloroplast respiratory chain. The immediate electron acceptor for the enzyme in this species is believed to be plastoquinone. Couples the redox reaction to proton translocation, and thus conserves the redox energy in a proton gradient. This is NAD(P)H-quinone oxidoreductase subunit I, chloroplastic from Arabis hirsuta (Hairy rock-cress).